The primary structure comprises 141 residues: Large ribosomal subunit protein uL13 (141 aa).

This sequence belongs to the universal ribosomal protein uL13 family. Part of the 50S ribosomal subunit.

Its function is as follows. This protein is one of the early assembly proteins of the 50S ribosomal subunit, although it is not seen to bind rRNA by itself. It is important during the early stages of 50S assembly. This chain is Large ribosomal subunit protein uL13, found in Helicobacter acinonychis (strain Sheeba).